Consider the following 129-residue polypeptide: Small ribosomal subunit protein uS11 (129 aa).

This sequence belongs to the universal ribosomal protein uS11 family. In terms of assembly, part of the 30S ribosomal subunit. Interacts with proteins S7 and S18. Binds to IF-3.

In terms of biological role, located on the platform of the 30S subunit, it bridges several disparate RNA helices of the 16S rRNA. Forms part of the Shine-Dalgarno cleft in the 70S ribosome. This Bacillus cereus (strain G9842) protein is Small ribosomal subunit protein uS11.